Reading from the N-terminus, the 238-residue chain is MTAQSKNYRKAASAIDRDRLYAPLEAVRLAKAGASTKFDSTVEVAFRLGVDPRKADQMVRGTVNLPHGTGKTARVLVFAVGERAEQARAAGADEVGGDELIEKVAGGYVDFDAAVATPDLMGKVGRLGRVLGPRGLMPNPRTGTVTMDVAKAVEEIKGGKIDFRVDKHANLHVVVGKASFDETALVENYASVLDEVLRLKPSSSKGRYIVKATLSTTMGPGIPLDASKTRNLTGEDAA.

The protein belongs to the universal ribosomal protein uL1 family. Part of the 50S ribosomal subunit.

In terms of biological role, binds directly to 23S rRNA. The L1 stalk is quite mobile in the ribosome, and is involved in E site tRNA release. Its function is as follows. Protein L1 is also a translational repressor protein, it controls the translation of the L11 operon by binding to its mRNA. The protein is Large ribosomal subunit protein uL1 of Beutenbergia cavernae (strain ATCC BAA-8 / DSM 12333 / CCUG 43141 / JCM 11478 / NBRC 16432 / NCIMB 13614 / HKI 0122).